A 174-amino-acid chain; its full sequence is Large ribosomal subunit protein uL10 (174 aa).

This sequence belongs to the universal ribosomal protein uL10 family. In terms of assembly, part of the ribosomal stalk of the 50S ribosomal subunit. The N-terminus interacts with L11 and the large rRNA to form the base of the stalk. The C-terminus forms an elongated spine to which L12 dimers bind in a sequential fashion forming a multimeric L10(L12)X complex.

Forms part of the ribosomal stalk, playing a central role in the interaction of the ribosome with GTP-bound translation factors. This chain is Large ribosomal subunit protein uL10, found in Pelobacter propionicus (strain DSM 2379 / NBRC 103807 / OttBd1).